An 897-amino-acid polypeptide reads, in one-letter code: Putative POM121-like protein 1-like (897 aa).

Basic and acidic residues predominate over residues 1–19 (MPEQDKDPRVQENPDDQRT). Disordered stretches follow at residues 1 to 177 (MPEQ…LPPP), 211 to 252 (IPDC…PKSQ), 266 to 302 (EVPS…RDTA), 315 to 348 (ASRD…GSLL), 362 to 469 (ATAA…ASRP), 484 to 522 (DCRP…RPKS), 536 to 612 (AEVP…LPPS), 642 to 741 (AQRS…ASRP), 753 to 793 (AISD…DRPK), and 812 to 856 (STAP…APFT). Residues 54-65 (LHAQSSEIRYNH) show a composition bias toward polar residues. Residues 66–76 (TSQTSWTSSST) are compositionally biased toward low complexity. Composition is skewed to polar residues over residues 77 to 89 (KRNA…SSTG), 103 to 114 (SRCQLTLSYSKT), and 219 to 228 (PSHTLSSLAT). Composition is skewed to polar residues over residues 376–385 (NQRSQTSRTR), 417–430 (SHCQ…NTVS), 490–499 (PSHTLSSLAT), and 556–579 (FSSS…TSLI). Residues 599–612 (TSAPAAAAAALPPS) are compositionally biased toward low complexity. Polar residues-rich tracts occupy residues 650 to 676 (NQRS…STEG), 689 to 702 (SHCQ…NTVS), 762 to 771 (PSHTLSSLAT), and 828 to 849 (FSSS…QDTS). The chain crosses the membrane as a helical span at residues 877–897 (LGLFLLVFSFFFLLTWASFSF).

This sequence belongs to the POM121 family.

Its subcellular location is the membrane. This is Putative POM121-like protein 1-like from Homo sapiens (Human).